Reading from the N-terminus, the 257-residue chain is Imidazole glycerol phosphate synthase subunit HisF (257 aa).

Active-site residues include Asp-11 and Asp-130.

The protein belongs to the HisA/HisF family. Heterodimer of HisH and HisF.

It is found in the cytoplasm. The catalysed reaction is 5-[(5-phospho-1-deoxy-D-ribulos-1-ylimino)methylamino]-1-(5-phospho-beta-D-ribosyl)imidazole-4-carboxamide + L-glutamine = D-erythro-1-(imidazol-4-yl)glycerol 3-phosphate + 5-amino-1-(5-phospho-beta-D-ribosyl)imidazole-4-carboxamide + L-glutamate + H(+). The protein operates within amino-acid biosynthesis; L-histidine biosynthesis; L-histidine from 5-phospho-alpha-D-ribose 1-diphosphate: step 5/9. Functionally, IGPS catalyzes the conversion of PRFAR and glutamine to IGP, AICAR and glutamate. The HisF subunit catalyzes the cyclization activity that produces IGP and AICAR from PRFAR using the ammonia provided by the HisH subunit. This is Imidazole glycerol phosphate synthase subunit HisF from Aeromonas salmonicida (strain A449).